The primary structure comprises 249 residues: Probable phosphatase VV2_1469 (249 aa).

Residues His8, His10, His16, His41, Glu74, His102, His132, Asp194, and His196 each coordinate Zn(2+).

This sequence belongs to the PHP family. The cofactor is Zn(2+).

This Vibrio vulnificus (strain CMCP6) protein is Probable phosphatase VV2_1469.